Consider the following 354-residue polypeptide: Uroporphyrinogen decarboxylase (354 aa).

Substrate is bound by residues 27 to 31 (RQAGR), D77, Y154, T209, and H327.

Belongs to the uroporphyrinogen decarboxylase family. In terms of assembly, homodimer.

The protein resides in the cytoplasm. It catalyses the reaction uroporphyrinogen III + 4 H(+) = coproporphyrinogen III + 4 CO2. It functions in the pathway porphyrin-containing compound metabolism; protoporphyrin-IX biosynthesis; coproporphyrinogen-III from 5-aminolevulinate: step 4/4. Its function is as follows. Catalyzes the decarboxylation of four acetate groups of uroporphyrinogen-III to yield coproporphyrinogen-III. The protein is Uroporphyrinogen decarboxylase of Edwardsiella ictaluri (strain 93-146).